Consider the following 397-residue polypeptide: Dual-specificity RNA methyltransferase RlmN (397 aa).

Catalysis depends on Glu120, which acts as the Proton acceptor. One can recognise a Radical SAM core domain in the interval 126-369; it reads ETDRGTLCVS…VRTPRGRDIL (244 aa). A disulfide bond links Cys133 and Cys372. [4Fe-4S] cluster is bound by residues Cys140, Cys144, and Cys147. S-adenosyl-L-methionine contacts are provided by residues 198-199, Ser230, 252-254, and Asn329; these read GE and SLH. The active-site S-methylcysteine intermediate is Cys372.

The protein belongs to the radical SAM superfamily. RlmN family. [4Fe-4S] cluster serves as cofactor.

Its subcellular location is the cytoplasm. The catalysed reaction is adenosine(2503) in 23S rRNA + 2 reduced [2Fe-2S]-[ferredoxin] + 2 S-adenosyl-L-methionine = 2-methyladenosine(2503) in 23S rRNA + 5'-deoxyadenosine + L-methionine + 2 oxidized [2Fe-2S]-[ferredoxin] + S-adenosyl-L-homocysteine. The enzyme catalyses adenosine(37) in tRNA + 2 reduced [2Fe-2S]-[ferredoxin] + 2 S-adenosyl-L-methionine = 2-methyladenosine(37) in tRNA + 5'-deoxyadenosine + L-methionine + 2 oxidized [2Fe-2S]-[ferredoxin] + S-adenosyl-L-homocysteine. Functionally, specifically methylates position 2 of adenine 2503 in 23S rRNA and position 2 of adenine 37 in tRNAs. m2A2503 modification seems to play a crucial role in the proofreading step occurring at the peptidyl transferase center and thus would serve to optimize ribosomal fidelity. This Nitrobacter winogradskyi (strain ATCC 25391 / DSM 10237 / CIP 104748 / NCIMB 11846 / Nb-255) protein is Dual-specificity RNA methyltransferase RlmN.